The primary structure comprises 203 residues: Small ribosomal subunit protein uS4 (203 aa).

Positions 93 to 156 (RRLDNVVYRL…LKVPAILEAV (64 aa)) constitute an S4 RNA-binding domain.

This sequence belongs to the universal ribosomal protein uS4 family. Part of the 30S ribosomal subunit. Contacts protein S5. The interaction surface between S4 and S5 is involved in control of translational fidelity.

One of the primary rRNA binding proteins, it binds directly to 16S rRNA where it nucleates assembly of the body of the 30S subunit. Its function is as follows. With S5 and S12 plays an important role in translational accuracy. In Streptococcus sanguinis (strain SK36), this protein is Small ribosomal subunit protein uS4.